A 174-amino-acid polypeptide reads, in one-letter code: Crossover junction endodeoxyribonuclease RuvC (174 aa).

Catalysis depends on residues D8, E67, and D139. Mg(2+) contacts are provided by D8, E67, and D139.

It belongs to the RuvC family. In terms of assembly, homodimer which binds Holliday junction (HJ) DNA. The HJ becomes 2-fold symmetrical on binding to RuvC with unstacked arms; it has a different conformation from HJ DNA in complex with RuvA. In the full resolvosome a probable DNA-RuvA(4)-RuvB(12)-RuvC(2) complex forms which resolves the HJ. The cofactor is Mg(2+).

The protein resides in the cytoplasm. It carries out the reaction Endonucleolytic cleavage at a junction such as a reciprocal single-stranded crossover between two homologous DNA duplexes (Holliday junction).. The RuvA-RuvB-RuvC complex processes Holliday junction (HJ) DNA during genetic recombination and DNA repair. Endonuclease that resolves HJ intermediates. Cleaves cruciform DNA by making single-stranded nicks across the HJ at symmetrical positions within the homologous arms, yielding a 5'-phosphate and a 3'-hydroxyl group; requires a central core of homology in the junction. The consensus cleavage sequence is 5'-(A/T)TT(C/G)-3'. Cleavage occurs on the 3'-side of the TT dinucleotide at the point of strand exchange. HJ branch migration catalyzed by RuvA-RuvB allows RuvC to scan DNA until it finds its consensus sequence, where it cleaves and resolves the cruciform DNA. The protein is Crossover junction endodeoxyribonuclease RuvC of Pseudoalteromonas translucida (strain TAC 125).